The chain runs to 82 residues: Small ribosomal subunit protein bS18 (82 aa).

A disordered region spans residues 1-20; that stretch reads MSEINQTVTRRPFHRRRKTC.

Belongs to the bacterial ribosomal protein bS18 family. Part of the 30S ribosomal subunit. Forms a tight heterodimer with protein bS6.

In terms of biological role, binds as a heterodimer with protein bS6 to the central domain of the 16S rRNA, where it helps stabilize the platform of the 30S subunit. The chain is Small ribosomal subunit protein bS18 from Bartonella quintana (strain Toulouse) (Rochalimaea quintana).